Consider the following 176-residue polypeptide: MILSDWDIRVYLEKKLLVINPLFPDTIRENGVDLRFGYQFCRFKKDQNIIVDTARDPVDKTLVCEETDENNGIIINPLEHVLATTLEWVEMPNDLIGFVNLRSTFARYSLYIPPTIIDAGFKGNITIELIGGSIPVKVYPKQRFLHVIFARTSSPVYRPYSGKYQKQRGVTPPKPD.

DCTP-binding positions include 102-107 (RSTFAR) and aspartate 118. The active-site Proton donor/acceptor is the glutamate 128. 3 residues coordinate dCTP: tyrosine 160, lysine 166, and glutamine 167.

Belongs to the dCTP deaminase family. As to quaternary structure, homotrimer.

It carries out the reaction dCTP + H2O + H(+) = dUTP + NH4(+). It participates in pyrimidine metabolism; dUMP biosynthesis; dUMP from dCTP (dUTP route): step 1/2. Catalyzes the deamination of dCTP to dUTP. This is dCTP deaminase from Staphylothermus marinus (strain ATCC 43588 / DSM 3639 / JCM 9404 / F1).